A 143-amino-acid chain; its full sequence is Transcriptional regulator MraZ (143 aa).

SpoVT-AbrB domains follow at residues 5–47 and 76–119; these read EYQH…PMSE and ATEC…SKEI.

This sequence belongs to the MraZ family. Forms oligomers.

It is found in the cytoplasm. Its subcellular location is the nucleoid. The polypeptide is Transcriptional regulator MraZ (Bacillus licheniformis (strain ATCC 14580 / DSM 13 / JCM 2505 / CCUG 7422 / NBRC 12200 / NCIMB 9375 / NCTC 10341 / NRRL NRS-1264 / Gibson 46)).